The primary structure comprises 98 residues: NADH-ubiquinone oxidoreductase chain 4L (98 aa).

Helical transmembrane passes span 1 to 21, 29 to 49, and 61 to 81; these read MSLV…GLLM, SLLC…IMIL, and IILL…LVMV.

It belongs to the complex I subunit 4L family. As to quaternary structure, core subunit of respiratory chain NADH dehydrogenase (Complex I) which is composed of 45 different subunits.

It is found in the mitochondrion inner membrane. The catalysed reaction is a ubiquinone + NADH + 5 H(+)(in) = a ubiquinol + NAD(+) + 4 H(+)(out). Core subunit of the mitochondrial membrane respiratory chain NADH dehydrogenase (Complex I) which catalyzes electron transfer from NADH through the respiratory chain, using ubiquinone as an electron acceptor. Part of the enzyme membrane arm which is embedded in the lipid bilayer and involved in proton translocation. The protein is NADH-ubiquinone oxidoreductase chain 4L (MT-ND4L) of Urotrichus talpoides (Japanese shrew mole).